Here is a 743-residue protein sequence, read N- to C-terminus: Catalase-peroxidase (743 aa).

The segment at 1–22 is disordered; the sequence is MEKQSNDAAVAGAPNDHGAAKC. The segment at residues 105–227 is a cross-link (tryptophyl-tyrosyl-methioninium (Trp-Tyr) (with M-253)); that stretch reads WHSAGTYRIT…LGAVQMGLIY (123 aa). His106 acts as the Proton acceptor in catalysis. The segment at residues 227 to 253 is a cross-link (tryptophyl-tyrosyl-methioninium (Tyr-Met) (with W-105)); it reads YVNPEGPNGNPDPVAAAKDIRETFFRM. His268 contacts heme b.

It belongs to the peroxidase family. Peroxidase/catalase subfamily. As to quaternary structure, homodimer or homotetramer. Requires heme b as cofactor. In terms of processing, formation of the three residue Trp-Tyr-Met cross-link is important for the catalase, but not the peroxidase activity of the enzyme.

It carries out the reaction H2O2 + AH2 = A + 2 H2O. The catalysed reaction is 2 H2O2 = O2 + 2 H2O. Functionally, bifunctional enzyme with both catalase and broad-spectrum peroxidase activity. This chain is Catalase-peroxidase, found in Solibacter usitatus (strain Ellin6076).